The primary structure comprises 921 residues: Isoleucine--tRNA ligase (921 aa).

The 'HIGH' region signature appears at 57 to 67 (PYANGDIHMGH). Residue E552 participates in L-isoleucyl-5'-AMP binding. The short motif at 593–597 (KMSKS) is the 'KMSKS' region element. Residue K596 participates in ATP binding. Residues C888, C891, C908, and C911 each contribute to the Zn(2+) site.

Belongs to the class-I aminoacyl-tRNA synthetase family. IleS type 1 subfamily. As to quaternary structure, monomer. The cofactor is Zn(2+).

Its subcellular location is the cytoplasm. The catalysed reaction is tRNA(Ile) + L-isoleucine + ATP = L-isoleucyl-tRNA(Ile) + AMP + diphosphate. Functionally, catalyzes the attachment of isoleucine to tRNA(Ile). As IleRS can inadvertently accommodate and process structurally similar amino acids such as valine, to avoid such errors it has two additional distinct tRNA(Ile)-dependent editing activities. One activity is designated as 'pretransfer' editing and involves the hydrolysis of activated Val-AMP. The other activity is designated 'posttransfer' editing and involves deacylation of mischarged Val-tRNA(Ile). The chain is Isoleucine--tRNA ligase from Bacillus mycoides (strain KBAB4) (Bacillus weihenstephanensis).